A 116-amino-acid chain; its full sequence is Acyl-CoA-binding protein homolog 3 (116 aa).

Residues 3–92 (LQEKFDAAVE…LNDMFDKIAE (90 aa)) form the ACB domain. An acyl-CoA is bound by residues 34–38 (YSLFK), K60, and Y79.

It belongs to the ACBP family.

In terms of biological role, binds medium- and long-chain acyl-CoA esters with very high affinity and may function as an intracellular carrier of acyl-CoA esters. In Caenorhabditis elegans, this protein is Acyl-CoA-binding protein homolog 3 (acbp-3).